Reading from the N-terminus, the 130-residue chain is Phosphoribosyl-AMP cyclohydrolase (130 aa).

Mg(2+) is bound at residue D77. C78 provides a ligand contact to Zn(2+). Mg(2+)-binding residues include D79 and D81. C95 and C102 together coordinate Zn(2+).

Belongs to the PRA-CH family. In terms of assembly, homodimer. Requires Mg(2+) as cofactor. Zn(2+) is required as a cofactor.

The protein localises to the cytoplasm. The catalysed reaction is 1-(5-phospho-beta-D-ribosyl)-5'-AMP + H2O = 1-(5-phospho-beta-D-ribosyl)-5-[(5-phospho-beta-D-ribosylamino)methylideneamino]imidazole-4-carboxamide. Its pathway is amino-acid biosynthesis; L-histidine biosynthesis; L-histidine from 5-phospho-alpha-D-ribose 1-diphosphate: step 3/9. Functionally, catalyzes the hydrolysis of the adenine ring of phosphoribosyl-AMP. This Pseudomonas syringae pv. syringae (strain B728a) protein is Phosphoribosyl-AMP cyclohydrolase.